A 275-amino-acid chain; its full sequence is 4-hydroxy-tetrahydrodipicolinate reductase (275 aa).

NAD(+)-binding positions include 13 to 18 (GAAGKM) and 108 to 110 (GTT). His-164 functions as the Proton donor/acceptor in the catalytic mechanism. A (S)-2,3,4,5-tetrahydrodipicolinate-binding site is contributed by His-165. Lys-168 functions as the Proton donor in the catalytic mechanism. Residue 174 to 175 (GT) coordinates (S)-2,3,4,5-tetrahydrodipicolinate.

The protein belongs to the DapB family.

The protein resides in the cytoplasm. It carries out the reaction (S)-2,3,4,5-tetrahydrodipicolinate + NAD(+) + H2O = (2S,4S)-4-hydroxy-2,3,4,5-tetrahydrodipicolinate + NADH + H(+). The enzyme catalyses (S)-2,3,4,5-tetrahydrodipicolinate + NADP(+) + H2O = (2S,4S)-4-hydroxy-2,3,4,5-tetrahydrodipicolinate + NADPH + H(+). The protein operates within amino-acid biosynthesis; L-lysine biosynthesis via DAP pathway; (S)-tetrahydrodipicolinate from L-aspartate: step 4/4. Its function is as follows. Catalyzes the conversion of 4-hydroxy-tetrahydrodipicolinate (HTPA) to tetrahydrodipicolinate. This Cyanothece sp. (strain PCC 7425 / ATCC 29141) protein is 4-hydroxy-tetrahydrodipicolinate reductase.